The chain runs to 337 residues: Heat-inducible transcription repressor HrcA (337 aa).

It belongs to the HrcA family.

Negative regulator of class I heat shock genes (grpE-dnaK-dnaJ and groELS operons). Prevents heat-shock induction of these operons. The sequence is that of Heat-inducible transcription repressor HrcA from Pseudarthrobacter chlorophenolicus (strain ATCC 700700 / DSM 12829 / CIP 107037 / JCM 12360 / KCTC 9906 / NCIMB 13794 / A6) (Arthrobacter chlorophenolicus).